A 212-amino-acid polypeptide reads, in one-letter code: Cytidylate kinase (212 aa).

Position 7 to 15 (7 to 15 (GPAASGKGT)) interacts with ATP.

Belongs to the cytidylate kinase family. Type 1 subfamily.

The protein localises to the cytoplasm. The catalysed reaction is CMP + ATP = CDP + ADP. The enzyme catalyses dCMP + ATP = dCDP + ADP. This chain is Cytidylate kinase, found in Rhodopseudomonas palustris (strain HaA2).